Consider the following 341-residue polypeptide: Uroporphyrinogen decarboxylase (341 aa).

Residues 23-27, Phe42, Asp73, Tyr148, Ser203, and His318 each bind substrate; that span reads RQAGR.

It belongs to the uroporphyrinogen decarboxylase family. In terms of assembly, homodimer.

It is found in the cytoplasm. The enzyme catalyses uroporphyrinogen III + 4 H(+) = coproporphyrinogen III + 4 CO2. Its pathway is porphyrin-containing compound metabolism; protoporphyrin-IX biosynthesis; coproporphyrinogen-III from 5-aminolevulinate: step 4/4. In terms of biological role, catalyzes the decarboxylation of four acetate groups of uroporphyrinogen-III to yield coproporphyrinogen-III. This is Uroporphyrinogen decarboxylase from Brucella melitensis biotype 1 (strain ATCC 23456 / CCUG 17765 / NCTC 10094 / 16M).